We begin with the raw amino-acid sequence, 556 residues long: Sesquiterpene synthase 2 (556 aa).

4 residues coordinate Mg(2+): Asp-309, Asp-313, Asp-453, and Glu-461. Positions 309 to 313 match the DDXXD motif motif; sequence DDIYD.

The protein belongs to the terpene synthase family. Tpsa subfamily. Requires Mg(2+) as cofactor. Mn(2+) serves as cofactor. As to expression, mostly expressed in roots and mature leaflets and, to a lower extent, in rachis and developing leaflets.

It catalyses the reaction (2E,6E)-farnesyl diphosphate = alpha-humulene + diphosphate. The catalysed reaction is (2E,6E)-farnesyl diphosphate = alpha-selinene + diphosphate. It carries out the reaction (2E,6E)-farnesyl diphosphate = delta-cadinene + diphosphate. The enzyme catalyses (2E,6E)-farnesyl diphosphate = (1S,2S,4R)-beta-elemene + diphosphate. Its pathway is secondary metabolite biosynthesis; terpenoid biosynthesis. Sesquiterpene synthase involved in the biosynthesis of volatile compounds known for their medicinal efficacy for treating enteritis, dysentery, itch and some cancers. Mediates the conversion of (2E,6E)-farnesyl diphosphate (FPP) into beta-elemene, alpha-humulene, delta-cadinene and alpha-selinene. The protein is Sesquiterpene synthase 2 of Toona sinensis (Chinese mahogany).